The sequence spans 187 residues: ATP synthase subunit b (187 aa).

A helical membrane pass occupies residues 4 to 24 (LALFALLMVPAILLASGHDSG).

Belongs to the ATPase B chain family. F-type ATPases have 2 components, F(1) - the catalytic core - and F(0) - the membrane proton channel. F(1) has five subunits: alpha(3), beta(3), gamma(1), delta(1), epsilon(1). F(0) has three main subunits: a(1), b(2) and c(10-14). The alpha and beta chains form an alternating ring which encloses part of the gamma chain. F(1) is attached to F(0) by a central stalk formed by the gamma and epsilon chains, while a peripheral stalk is formed by the delta and b chains.

The protein localises to the cell inner membrane. Its function is as follows. F(1)F(0) ATP synthase produces ATP from ADP in the presence of a proton or sodium gradient. F-type ATPases consist of two structural domains, F(1) containing the extramembraneous catalytic core and F(0) containing the membrane proton channel, linked together by a central stalk and a peripheral stalk. During catalysis, ATP synthesis in the catalytic domain of F(1) is coupled via a rotary mechanism of the central stalk subunits to proton translocation. Component of the F(0) channel, it forms part of the peripheral stalk, linking F(1) to F(0). The sequence is that of ATP synthase subunit b from Sulfurovum sp. (strain NBC37-1).